The sequence spans 216 residues: Octanoyltransferase (216 aa).

The BPL/LPL catalytic domain maps to 32-207 (SDSQDELWIV…TFSQIMGYQQ (176 aa)). Residues 71–78 (RGGQVTYH), 138–140 (SLG), and 151–153 (GLA) contribute to the substrate site. The active-site Acyl-thioester intermediate is cysteine 169.

This sequence belongs to the LipB family.

The protein resides in the cytoplasm. The catalysed reaction is octanoyl-[ACP] + L-lysyl-[protein] = N(6)-octanoyl-L-lysyl-[protein] + holo-[ACP] + H(+). Its pathway is protein modification; protein lipoylation via endogenous pathway; protein N(6)-(lipoyl)lysine from octanoyl-[acyl-carrier-protein]: step 1/2. Catalyzes the transfer of endogenously produced octanoic acid from octanoyl-acyl-carrier-protein onto the lipoyl domains of lipoate-dependent enzymes. Lipoyl-ACP can also act as a substrate although octanoyl-ACP is likely to be the physiological substrate. This is Octanoyltransferase from Shewanella frigidimarina (strain NCIMB 400).